Consider the following 329-residue polypeptide: Elongation factor Ts (329 aa).

The segment at 79–82 (TDFV) is involved in Mg(2+) ion dislocation from EF-Tu.

The protein belongs to the EF-Ts family.

Its subcellular location is the cytoplasm. Its function is as follows. Associates with the EF-Tu.GDP complex and induces the exchange of GDP to GTP. It remains bound to the aminoacyl-tRNA.EF-Tu.GTP complex up to the GTP hydrolysis stage on the ribosome. The protein is Elongation factor Ts of Parabacteroides distasonis (strain ATCC 8503 / DSM 20701 / CIP 104284 / JCM 5825 / NCTC 11152).